The following is a 425-amino-acid chain: D-tagatose 6-phosphate 4-epimerase (425 aa).

This sequence belongs to the GatZ/KbaZ family.

It carries out the reaction keto-D-tagatose 6-phosphate = keto-D-fructose 6-phosphate. It functions in the pathway carbohydrate metabolism. In terms of biological role, involved in galactitol and D-altritol catabolism. Catalyzes the epimerization of D-tagatose 6-phosphate to D-fructose 6-phosphate. The chain is D-tagatose 6-phosphate 4-epimerase from Agrobacterium fabrum (strain C58 / ATCC 33970) (Agrobacterium tumefaciens (strain C58)).